We begin with the raw amino-acid sequence, 163 residues long: Phosphopantetheine adenylyltransferase (163 aa).

Thr9 serves as a coordination point for substrate. Residues 9–10 (TF) and His17 contribute to the ATP site. 3 residues coordinate substrate: Lys41, Leu76, and Arg90. ATP-binding positions include 91–93 (GLR), Glu101, and 126–132 (YSFISST).

The protein belongs to the bacterial CoaD family. In terms of assembly, homohexamer. Mg(2+) serves as cofactor.

It localises to the cytoplasm. It catalyses the reaction (R)-4'-phosphopantetheine + ATP + H(+) = 3'-dephospho-CoA + diphosphate. Its pathway is cofactor biosynthesis; coenzyme A biosynthesis; CoA from (R)-pantothenate: step 4/5. Its function is as follows. Reversibly transfers an adenylyl group from ATP to 4'-phosphopantetheine, yielding dephospho-CoA (dPCoA) and pyrophosphate. This is Phosphopantetheine adenylyltransferase from Dichelobacter nodosus (strain VCS1703A).